Consider the following 91-residue polypeptide: MSENTTATTRARRKVREGLVVSDKMEKTVVVEVEDRVKHALYGKIMRRTSKLKVHDEQNSAGIGDRVLIMETRPLSATKRWRLVEILEKAK.

It belongs to the universal ribosomal protein uS17 family. As to quaternary structure, part of the 30S ribosomal subunit.

Functionally, one of the primary rRNA binding proteins, it binds specifically to the 5'-end of 16S ribosomal RNA. The sequence is that of Small ribosomal subunit protein uS17 from Salinispora arenicola (strain CNS-205).